The following is a 206-amino-acid chain: Large ribosomal subunit protein uL4 (206 aa).

A disordered region spans residues 48–78 (THSVKTRGHVSGGGAKPWRQKGTGRARAGSN).

The protein belongs to the universal ribosomal protein uL4 family. Part of the 50S ribosomal subunit.

One of the primary rRNA binding proteins, this protein initially binds near the 5'-end of the 23S rRNA. It is important during the early stages of 50S assembly. It makes multiple contacts with different domains of the 23S rRNA in the assembled 50S subunit and ribosome. Its function is as follows. Forms part of the polypeptide exit tunnel. The chain is Large ribosomal subunit protein uL4 from Lawsonia intracellularis (strain PHE/MN1-00).